The primary structure comprises 1507 residues: Protein TIC 214 (1507 aa).

6 helical membrane passes run 4–24, 53–73, 81–101, 129–149, 163–183, and 202–222; these read IYLV…LPIG, TILL…VLAL, LWVK…IYLY, AFLE…NPVF, ISTF…IFFL, and LVKI…SFLC.

The protein belongs to the TIC214 family. In terms of assembly, part of the Tic complex.

Its subcellular location is the plastid. The protein resides in the chloroplast inner membrane. Involved in protein precursor import into chloroplasts. May be part of an intermediate translocation complex acting as a protein-conducting channel at the inner envelope. This is Protein TIC 214 from Staurastrum punctulatum (Green alga).